Here is a 436-residue protein sequence, read N- to C-terminus: Glutamate-1-semialdehyde 2,1-aminomutase (436 aa).

The residue at position 270 (Lys-270) is an N6-(pyridoxal phosphate)lysine.

Belongs to the class-III pyridoxal-phosphate-dependent aminotransferase family. HemL subfamily. In terms of assembly, homodimer. Pyridoxal 5'-phosphate serves as cofactor.

It localises to the cytoplasm. The enzyme catalyses (S)-4-amino-5-oxopentanoate = 5-aminolevulinate. Its pathway is porphyrin-containing compound metabolism; protoporphyrin-IX biosynthesis; 5-aminolevulinate from L-glutamyl-tRNA(Glu): step 2/2. This chain is Glutamate-1-semialdehyde 2,1-aminomutase, found in Cutibacterium acnes (strain DSM 16379 / KPA171202) (Propionibacterium acnes).